The chain runs to 72 residues: Translation initiation factor IF-1 (72 aa).

The S1-like domain maps to 1–72 (MSKEELLEFP…TKGRITYRFK (72 aa)).

It belongs to the IF-1 family. As to quaternary structure, component of the 30S ribosomal translation pre-initiation complex which assembles on the 30S ribosome in the order IF-2 and IF-3, IF-1 and N-formylmethionyl-tRNA(fMet); mRNA recruitment can occur at any time during PIC assembly.

The protein resides in the cytoplasm. One of the essential components for the initiation of protein synthesis. Stabilizes the binding of IF-2 and IF-3 on the 30S subunit to which N-formylmethionyl-tRNA(fMet) subsequently binds. Helps modulate mRNA selection, yielding the 30S pre-initiation complex (PIC). Upon addition of the 50S ribosomal subunit IF-1, IF-2 and IF-3 are released leaving the mature 70S translation initiation complex. The protein is Translation initiation factor IF-1 of Parvibaculum lavamentivorans (strain DS-1 / DSM 13023 / NCIMB 13966).